The following is a 312-amino-acid chain: Protoheme IX farnesyltransferase (312 aa).

A run of 9 helical transmembrane segments spans residues V29–N49, P50–L70, I90–F110, L117–V137, I150–G170, V177–F197, A223–A243, G248–A268, and L292–F312.

Belongs to the UbiA prenyltransferase family. Protoheme IX farnesyltransferase subfamily.

It localises to the cell inner membrane. It carries out the reaction heme b + (2E,6E)-farnesyl diphosphate + H2O = Fe(II)-heme o + diphosphate. It participates in porphyrin-containing compound metabolism; heme O biosynthesis; heme O from protoheme: step 1/1. In terms of biological role, converts heme B (protoheme IX) to heme O by substitution of the vinyl group on carbon 2 of heme B porphyrin ring with a hydroxyethyl farnesyl side group. This Brucella anthropi (strain ATCC 49188 / DSM 6882 / CCUG 24695 / JCM 21032 / LMG 3331 / NBRC 15819 / NCTC 12168 / Alc 37) (Ochrobactrum anthropi) protein is Protoheme IX farnesyltransferase.